We begin with the raw amino-acid sequence, 363 residues long: Branched-chain-amino-acid aminotransferase 2 (363 aa).

The residue at position 197 (lysine 197) is an N6-(pyridoxal phosphate)lysine.

This sequence belongs to the class-IV pyridoxal-phosphate-dependent aminotransferase family. Requires pyridoxal 5'-phosphate as cofactor.

The enzyme catalyses L-leucine + 2-oxoglutarate = 4-methyl-2-oxopentanoate + L-glutamate. It carries out the reaction L-isoleucine + 2-oxoglutarate = (S)-3-methyl-2-oxopentanoate + L-glutamate. It catalyses the reaction L-valine + 2-oxoglutarate = 3-methyl-2-oxobutanoate + L-glutamate. Its pathway is amino-acid biosynthesis; L-isoleucine biosynthesis; L-isoleucine from 2-oxobutanoate: step 4/4. It participates in amino-acid biosynthesis; L-leucine biosynthesis; L-leucine from 3-methyl-2-oxobutanoate: step 4/4. It functions in the pathway amino-acid biosynthesis; L-valine biosynthesis; L-valine from pyruvate: step 4/4. Inhibited by canaline. Its function is as follows. Transaminates branched-chain amino acids and ketoglutarate. This Bacillus subtilis (strain 168) protein is Branched-chain-amino-acid aminotransferase 2 (ilvK).